Consider the following 359-residue polypeptide: ELAV-like protein 2 (359 aa).

Residues 1–39 (METQLSNGPTCNNTANGPTTVNNNCSSPVDSGNTEDSKT) are disordered. 2 RRM domains span residues 39–117 (TNLI…YARP) and 125–205 (ANLY…FANN). At serine 221 the chain carries Phosphoserine. An RRM 3 domain is found at 276–354 (WCIFVYNLAP…RVLQVSFKTN (79 aa)).

Belongs to the RRM elav family. As to quaternary structure, interacts with IGF2BP1. Interacts with MAP1B light chain LC1.

Functionally, RNA-binding protein that binds to the 3' untranslated region (3'UTR) of target mRNAs. Seems to recognize a GAAA motif. Can bind to its own 3'UTR, the FOS 3'UTR and the ID 3'UTR. In Rattus norvegicus (Rat), this protein is ELAV-like protein 2 (Elavl2).